Consider the following 620-residue polypeptide: Probable potassium transport system protein Kup (620 aa).

A run of 12 helical transmembrane segments spans residues 8–28 (VGLL…SPLY), 50–70 (VLSL…VILI), 102–122 (MLLG…TPAI), 136–156 (PDLK…LFAI), 168–188 (FGPV…ANIV), 211–231 (LMSF…EALY), 246–266 (WFSL…ALLI), 284–304 (MVMP…QAVI), 336–356 (IYVP…VIGF), 368–388 (IAVT…MALL), 393–413 (MALV…YFAA), and 415–435 (IIKV…SFTV).

Belongs to the HAK/KUP transporter (TC 2.A.72) family.

It localises to the cell inner membrane. It catalyses the reaction K(+)(in) + H(+)(in) = K(+)(out) + H(+)(out). Its function is as follows. Transport of potassium into the cell. Likely operates as a K(+):H(+) symporter. This is Probable potassium transport system protein Kup from Rhodopseudomonas palustris (strain HaA2).